The primary structure comprises 195 residues: Guanylate kinase (195 aa).

The Guanylate kinase-like domain occupies 5–183 (GILFVISGPS…ALQKITAIII (179 aa)). 12–19 (GPSGVGKG) lines the ATP pocket.

Belongs to the guanylate kinase family.

It is found in the cytoplasm. The enzyme catalyses GMP + ATP = GDP + ADP. In terms of biological role, essential for recycling GMP and indirectly, cGMP. The chain is Guanylate kinase from Syntrophomonas wolfei subsp. wolfei (strain DSM 2245B / Goettingen).